The primary structure comprises 519 residues: Methionine--tRNA ligase (519 aa).

Residues 11 to 21 (AYPNAAPHVGH) carry the 'HIGH' region motif. The short motif at 299–303 (KMSKS) is the 'KMSKS' region element. Position 302 (lysine 302) interacts with ATP. A disordered region spans residues 500-519 (LPPPTGVFPRYQPPQPPEGK).

Belongs to the class-I aminoacyl-tRNA synthetase family. MetG type 2B subfamily. In terms of assembly, monomer.

It localises to the cytoplasm. It carries out the reaction tRNA(Met) + L-methionine + ATP = L-methionyl-tRNA(Met) + AMP + diphosphate. Its function is as follows. Is required not only for elongation of protein synthesis but also for the initiation of all mRNA translation through initiator tRNA(fMet) aminoacylation. This Mycobacterium tuberculosis (strain ATCC 25618 / H37Rv) protein is Methionine--tRNA ligase.